The primary structure comprises 186 residues: Imidazole glycerol phosphate synthase subunit HisH (186 aa).

Residues 1-186 form the Glutamine amidotransferase type-1 domain; the sequence is MIAIIDYGSG…KLLRNFGELA (186 aa). The active-site Nucleophile is the C72. Active-site residues include H167 and E169.

As to quaternary structure, heterodimer of HisH and HisF.

Its subcellular location is the cytoplasm. It catalyses the reaction 5-[(5-phospho-1-deoxy-D-ribulos-1-ylimino)methylamino]-1-(5-phospho-beta-D-ribosyl)imidazole-4-carboxamide + L-glutamine = D-erythro-1-(imidazol-4-yl)glycerol 3-phosphate + 5-amino-1-(5-phospho-beta-D-ribosyl)imidazole-4-carboxamide + L-glutamate + H(+). The catalysed reaction is L-glutamine + H2O = L-glutamate + NH4(+). The protein operates within amino-acid biosynthesis; L-histidine biosynthesis; L-histidine from 5-phospho-alpha-D-ribose 1-diphosphate: step 5/9. Its function is as follows. IGPS catalyzes the conversion of PRFAR and glutamine to IGP, AICAR and glutamate. The HisH subunit catalyzes the hydrolysis of glutamine to glutamate and ammonia as part of the synthesis of IGP and AICAR. The resulting ammonia molecule is channeled to the active site of HisF. The protein is Imidazole glycerol phosphate synthase subunit HisH of Picrophilus torridus (strain ATCC 700027 / DSM 9790 / JCM 10055 / NBRC 100828 / KAW 2/3).